Here is a 434-residue protein sequence, read N- to C-terminus: MPETDEEKVRRYTECLMNGIDPKRALKRLYDLNVSPEVFKSADTYQCVKRYESSPELAKYAKRVRDKLLGGRKREKGGGEDDADIEHTALKKAKKEEVNLDEEFAEAMKSGVSAQASSAPRATVDYSKYKVVKRVEVKVEPKPEPVDVHEQQASSSSMSYQREHQKDYAPVVPTCKPSGQPKKAIPQSKSLHADENMFKPRKERQKVFAGRRKRVGEGVSTLVSLCQTVLMSHIDMIDHVGIVPFDLLKPVLDHASTDQLRHILDVNPMLVEDADEMFHEMVSREFPKYANREKSGWTWREMYDRLVEKKQKKENDKLEMLTSRIGKSNSAQSQGRQTMVIDMAHTRVRSKSFFNTVKDSQVKMSATPSALQLSQARKNVKIEGKAQLRTITPRGGGVPSTSRSRSNNNNNMNNGLVVKKTAPLMAKCKKMLKR.

A disordered region spans residues 142 to 161 (KPEPVDVHEQQASSSSMSYQ). The segment covering 151 to 160 (QQASSSSMSY) has biased composition (polar residues). A BC box region spans residues 221–230 (TLVSLCQTVL). The F-box domain occupies 237–281 (IDHVGIVPFDLLKPVLDHASTDQLRHILDVNPMLVEDADEMFHEM). A disordered region spans residues 391-415 (ITPRGGGVPSTSRSRSNNNNNMNNG).

Heterotrimer of an A, B and C subunit.

The protein resides in the nucleus. Its function is as follows. SIII, also known as elongin, is a general transcription elongation factor that increases the RNA polymerase II transcription elongation past template-encoded arresting sites. Subunit A is transcriptionally active and its transcription activity is strongly enhanced by binding to the dimeric complex of the SIII regulatory subunits B and C (elongin BC complex). This is Transcription elongation factor B polypeptide 3 from Caenorhabditis elegans.